The chain runs to 265 residues: Cytosolic Fe-S cluster assembly factor NUBP2 homolog (265 aa).

Residue 22–29 coordinates ATP; the sequence is GKGGVGKS. The [4Fe-4S] cluster site is built by Cys-196 and Cys-199.

Belongs to the Mrp/NBP35 ATP-binding proteins family. NUBP2/CFD1 subfamily. In terms of assembly, heterotetramer of 2 NUBP1 and 2 NUBP2 chains. The cofactor is [4Fe-4S] cluster.

The protein resides in the cytoplasm. Functionally, component of the cytosolic iron-sulfur (Fe/S) protein assembly (CIA) machinery. Required for maturation of extramitochondrial Fe-S proteins. The NUBP1-NUBP2 heterotetramer forms a Fe-S scaffold complex, mediating the de novo assembly of an Fe-S cluster and its transfer to target apoproteins. This chain is Cytosolic Fe-S cluster assembly factor NUBP2 homolog, found in Trichoplax adhaerens (Trichoplax reptans).